A 437-amino-acid polypeptide reads, in one-letter code: MSADYFADFQTVRYEGPDSDNDFAYRWYDKDRVILGKRMEDHLRFAVCMWHTFCWPGSDVFGAGTFTRPWLQGPMDARNAAAKREAALAFVEKLDVPFYCFHDVDVMAEAEGIGEFRSSFAEAVDHLEELQGKHGRKLLWGTANLFGHPRYMAGAATNPDPEVFAWGASQVRDALEATHRLGGANYVLWGGREGYDSILNTEIGIEQENFGRFLSLVVDHKHRIGFKGTILIEPKPHEPTKHQYDFDTQTVFGFLKRFGLESEVKVNIEANHATLSGHTFEHELAMARALGILGSIDANRGDHQNGWDTDQFPNSVEELTLAMLELIRAGGFTDGGFNFDAKVRRQSIDAADLFHGHIGGIDTIAHALVKAAALIEDGKLDAFRAERYAGWQGELGRKIHADGTTLADIADIAVARDLAPVRRSGRQEWCENLINRV.

Catalysis depends on residues histidine 102 and aspartate 105. Mg(2+)-binding residues include glutamate 233, glutamate 269, histidine 272, aspartate 297, aspartate 308, aspartate 310, and aspartate 340.

Belongs to the xylose isomerase family. Homotetramer. It depends on Mg(2+) as a cofactor.

The protein localises to the cytoplasm. The catalysed reaction is alpha-D-xylose = alpha-D-xylulofuranose. The protein is Xylose isomerase of Novosphingobium aromaticivorans (strain ATCC 700278 / DSM 12444 / CCUG 56034 / CIP 105152 / NBRC 16084 / F199).